The sequence spans 448 residues: Bifunctional protein GlmU (448 aa).

Residues 1 to 230 (MRSCLSIVLA…FDNIVGINNC (230 aa)) are pyrophosphorylase. UDP-N-acetyl-alpha-D-glucosamine is bound by residues 9–12 (LAAG), K23, Q76, and 81–82 (GT). D106 contributes to the Mg(2+) binding site. Positions 142, 156, 171, and 228 each coordinate UDP-N-acetyl-alpha-D-glucosamine. N228 lines the Mg(2+) pocket. Positions 231–251 (FELFEADSLWQKRKARDLMLS) are linker. The N-acetyltransferase stretch occupies residues 252-448 (GVTILKPETV…VRLSGNQQKK (197 aa)). UDP-N-acetyl-alpha-D-glucosamine-binding residues include R317 and K335. Residue H347 is the Proton acceptor of the active site. The UDP-N-acetyl-alpha-D-glucosamine site is built by Y350 and N361. Residues A364, 370-371 (NY), S389, S407, and R424 each bind acetyl-CoA.

It in the N-terminal section; belongs to the N-acetylglucosamine-1-phosphate uridyltransferase family. This sequence in the C-terminal section; belongs to the transferase hexapeptide repeat family. As to quaternary structure, homotrimer. Requires Mg(2+) as cofactor.

The protein resides in the cytoplasm. It catalyses the reaction alpha-D-glucosamine 1-phosphate + acetyl-CoA = N-acetyl-alpha-D-glucosamine 1-phosphate + CoA + H(+). It carries out the reaction N-acetyl-alpha-D-glucosamine 1-phosphate + UTP + H(+) = UDP-N-acetyl-alpha-D-glucosamine + diphosphate. Its pathway is nucleotide-sugar biosynthesis; UDP-N-acetyl-alpha-D-glucosamine biosynthesis; N-acetyl-alpha-D-glucosamine 1-phosphate from alpha-D-glucosamine 6-phosphate (route II): step 2/2. It functions in the pathway nucleotide-sugar biosynthesis; UDP-N-acetyl-alpha-D-glucosamine biosynthesis; UDP-N-acetyl-alpha-D-glucosamine from N-acetyl-alpha-D-glucosamine 1-phosphate: step 1/1. The protein operates within bacterial outer membrane biogenesis; LPS lipid A biosynthesis. Functionally, catalyzes the last two sequential reactions in the de novo biosynthetic pathway for UDP-N-acetylglucosamine (UDP-GlcNAc). The C-terminal domain catalyzes the transfer of acetyl group from acetyl coenzyme A to glucosamine-1-phosphate (GlcN-1-P) to produce N-acetylglucosamine-1-phosphate (GlcNAc-1-P), which is converted into UDP-GlcNAc by the transfer of uridine 5-monophosphate (from uridine 5-triphosphate), a reaction catalyzed by the N-terminal domain. The chain is Bifunctional protein GlmU from Bartonella quintana (strain Toulouse) (Rochalimaea quintana).